A 932-amino-acid chain; its full sequence is Lipoxygenase 2.2, chloroplastic (932 aa).

A PLAT domain is found at 79-219; that stretch reads MKATVSVHMK…CSPDKRTFFP (141 aa). The region spanning 223–932 is the Lipoxygenase domain; the sequence is SYIPSQTPKG…EMGIPNSISI (710 aa). The span at 270-284 shows a compositional bias: basic and acidic residues; that stretch reads PESKRPVLGGKEHPY. The disordered stretch occupies residues 270-311; that stretch reads PESKRPVLGGKEHPYPRRCRTGRPRSKTDPSSEEESHKKGEM. Positions 285-294 are enriched in basic residues; sequence PRRCRTGRPR. The segment covering 295 to 311 has biased composition (basic and acidic residues); it reads SKTDPSSEEESHKKGEM. The Fe cation site is built by His-588, His-593, His-778, Asn-782, and Ile-932.

It belongs to the lipoxygenase family. Fe cation is required as a cofactor.

It localises to the plastid. Its subcellular location is the chloroplast. It carries out the reaction (9Z,12Z)-octadecadienoate + O2 = (13S)-hydroperoxy-(9Z,11E)-octadecadienoate. The catalysed reaction is (9Z,12Z,15Z)-octadecatrienoate + O2 = (13S)-hydroperoxy-(9Z,11E,15Z)-octadecatrienoate. Its pathway is lipid metabolism; oxylipin biosynthesis. Plant lipoxygenase may be involved in a number of diverse aspects of plant physiology including growth and development, pest resistance, and senescence or responses to wounding. This enzyme exhibits linoleate 13-lipoxygenase activity. The protein is Lipoxygenase 2.2, chloroplastic (LOX2.2) of Hordeum vulgare (Barley).